The sequence spans 319 residues: Glutamyl-Q tRNA(Asp) synthetase (319 aa).

L-glutamate contacts are provided by residues 23–27 (RFAPS) and E59. Positions 26 to 36 (PSPSGPLHAGS) match the 'HIGH' region motif. Zn(2+) contacts are provided by C115, C117, Y139, and C143. 2 residues coordinate L-glutamate: Y197 and R215. Residues 254–258 (KLSKQ) carry the 'KMSKS' region motif. K257 serves as a coordination point for ATP.

Belongs to the class-I aminoacyl-tRNA synthetase family. GluQ subfamily. Zn(2+) serves as cofactor.

Its function is as follows. Catalyzes the tRNA-independent activation of glutamate in presence of ATP and the subsequent transfer of glutamate onto a tRNA(Asp). Glutamate is transferred on the 2-amino-5-(4,5-dihydroxy-2-cyclopenten-1-yl) moiety of the queuosine in the wobble position of the QUC anticodon. This chain is Glutamyl-Q tRNA(Asp) synthetase, found in Bordetella bronchiseptica (strain ATCC BAA-588 / NCTC 13252 / RB50) (Alcaligenes bronchisepticus).